We begin with the raw amino-acid sequence, 188 residues long: Threonylcarbamoyl-AMP synthase (188 aa).

One can recognise a YrdC-like domain in the interval 8–188 (EGAQPGLHAY…DLATGKILRA (181 aa)).

Belongs to the SUA5 family. TsaC subfamily.

Its subcellular location is the cytoplasm. The catalysed reaction is L-threonine + hydrogencarbonate + ATP = L-threonylcarbamoyladenylate + diphosphate + H2O. Required for the formation of a threonylcarbamoyl group on adenosine at position 37 (t(6)A37) in tRNAs that read codons beginning with adenine. Catalyzes the conversion of L-threonine, HCO(3)(-)/CO(2) and ATP to give threonylcarbamoyl-AMP (TC-AMP) as the acyladenylate intermediate, with the release of diphosphate. In Thiobacillus denitrificans (strain ATCC 25259 / T1), this protein is Threonylcarbamoyl-AMP synthase.